The primary structure comprises 262 residues: Hydroxyethylthiazole kinase (262 aa).

Residue Met50 participates in substrate binding. ATP is bound by residues Arg125 and Thr171. Gly198 contacts substrate.

It belongs to the Thz kinase family. The cofactor is Mg(2+).

It catalyses the reaction 5-(2-hydroxyethyl)-4-methylthiazole + ATP = 4-methyl-5-(2-phosphooxyethyl)-thiazole + ADP + H(+). It participates in cofactor biosynthesis; thiamine diphosphate biosynthesis; 4-methyl-5-(2-phosphoethyl)-thiazole from 5-(2-hydroxyethyl)-4-methylthiazole: step 1/1. Catalyzes the phosphorylation of the hydroxyl group of 4-methyl-5-beta-hydroxyethylthiazole (THZ). This Escherichia coli (strain 55989 / EAEC) protein is Hydroxyethylthiazole kinase.